The chain runs to 504 residues: Cytochrome P450 3A41 (504 aa).

Position 443 (C443) interacts with heme.

It belongs to the cytochrome P450 family. Heme serves as cofactor. Expressed in liver. Also expressed in the kidneys of female mice, with traces in the stomach, ovary, and heart of female mice and in the testis of male mice.

Its subcellular location is the endoplasmic reticulum membrane. The protein localises to the microsome membrane. The enzyme catalyses an organic molecule + reduced [NADPH--hemoprotein reductase] + O2 = an alcohol + oxidized [NADPH--hemoprotein reductase] + H2O + H(+). This chain is Cytochrome P450 3A41 (Cyp3a41a), found in Mus musculus (Mouse).